The primary structure comprises 221 residues: 2-phospho-L-lactate guanylyltransferase (221 aa).

This sequence belongs to the CofC family. In terms of assembly, homodimer.

The enzyme catalyses (2S)-2-phospholactate + GTP + H(+) = (2S)-lactyl-2-diphospho-5'-guanosine + diphosphate. Its pathway is cofactor biosynthesis; coenzyme F420 biosynthesis. Guanylyltransferase that catalyzes the activation of (2S)-2-phospholactate (2-PL) as (2S)-lactyl-2-diphospho-5'-guanosine, via the condensation of 2-PL with GTP. It is involved in the biosynthesis of coenzyme F420, a hydride carrier cofactor. This is 2-phospho-L-lactate guanylyltransferase from Methanothrix thermoacetophila (strain DSM 6194 / JCM 14653 / NBRC 101360 / PT) (Methanosaeta thermophila).